The primary structure comprises 485 residues: MSLFDHSVSELHKKLNNKEISVTDLVEESYKRIADVEDNVKAFLTLDEENARAKAKELDAKIGAEDNGLLFGMPIGVKDNIVTNGLRTTCASKMLANFDPIYDATVVQKLKAADTITIGKLNMDEFAMGSSNENSGFYATKNPWNLDYVPGGSSGGSAAAVAAGEVLFSLGSDTGGSIRQPAAYCGVVGLKPTYGRVSRYGLVAFASSLDQIGPITRTVEDNAYLLQAISGLDRMDATSANVEVGNYLAGLTGDVKGLRIAVPKEYLGEGVGEEARESVLAALKVLEGMGATWEEVSLPHSKYALATYYLLSSSEASANLSRFDGVRYGVRSDNVNNLLDLYKNTRSEGFGDEVKRRIMLGTFALSSGYYDAYYKKAQQVRTLIKNDFENVFANYDVIIGPTTPTPAFKVGEKVDDPMTMYANDILTIPVNLAGVPAISVPCGFGANNMPLGLQIIGKHFDEATIYRVAHAFEQATDYHTKKASL.

Active-site charge relay system residues include Lys-78 and Ser-153. Residue Ser-177 is the Acyl-ester intermediate of the active site.

The protein belongs to the amidase family. GatA subfamily. In terms of assembly, heterotrimer of A, B and C subunits.

It catalyses the reaction L-glutamyl-tRNA(Gln) + L-glutamine + ATP + H2O = L-glutaminyl-tRNA(Gln) + L-glutamate + ADP + phosphate + H(+). In terms of biological role, allows the formation of correctly charged Gln-tRNA(Gln) through the transamidation of misacylated Glu-tRNA(Gln) in organisms which lack glutaminyl-tRNA synthetase. The reaction takes place in the presence of glutamine and ATP through an activated gamma-phospho-Glu-tRNA(Gln). This Bacillus cereus (strain Q1) protein is Glutamyl-tRNA(Gln) amidotransferase subunit A.